Here is a 366-residue protein sequence, read N- to C-terminus: MNTFGRKLRLTTFGESHGNAIGGVIDGFPSGVKIDEKFIQAELDKRKPGGKFATARKENDKVQIFSGIFEGVSIGTPIGFIIFNENQKSKDYENIKNLFRPGHADFGYFKKFVIRDYRGGGRSSARETAVRVAAGAFAQILLNEFDICVQSGIFSIGSINKGGEISNAKNLKMDFDYAQTSEIFSLFKEFENEMKNEILNAKNAHDSVGGNVVTRVKNVPAGLGEVLYDKIDAKIAYALMGINGVKAVEIGAGVKASEMIGSENNDEILPFGKFKTNHSGGILGGITNGDEIIVKSHFKPTPSIFLAQNTIDESGAVKTLSLKGRHDPCIAVRGSVVATAMMRLIVADMMLLNLGSTLTSLKKFYL.

Residue R46 coordinates NADP(+). Residues 122–124, 243–244, G284, 299–303, and R325 contribute to the FMN site; these read RSS, NG, and KPTPS.

This sequence belongs to the chorismate synthase family. In terms of assembly, homotetramer. The cofactor is FMNH2.

The catalysed reaction is 5-O-(1-carboxyvinyl)-3-phosphoshikimate = chorismate + phosphate. It participates in metabolic intermediate biosynthesis; chorismate biosynthesis; chorismate from D-erythrose 4-phosphate and phosphoenolpyruvate: step 7/7. Functionally, catalyzes the anti-1,4-elimination of the C-3 phosphate and the C-6 proR hydrogen from 5-enolpyruvylshikimate-3-phosphate (EPSP) to yield chorismate, which is the branch point compound that serves as the starting substrate for the three terminal pathways of aromatic amino acid biosynthesis. This reaction introduces a second double bond into the aromatic ring system. This chain is Chorismate synthase, found in Campylobacter hominis (strain ATCC BAA-381 / DSM 21671 / CCUG 45161 / LMG 19568 / NCTC 13146 / CH001A).